The primary structure comprises 330 residues: Tetraacyldisaccharide 4'-kinase (330 aa).

Residue 58 to 65 (TVGGSGKT) coordinates ATP.

Belongs to the LpxK family.

It carries out the reaction a lipid A disaccharide + ATP = a lipid IVA + ADP + H(+). The protein operates within glycolipid biosynthesis; lipid IV(A) biosynthesis; lipid IV(A) from (3R)-3-hydroxytetradecanoyl-[acyl-carrier-protein] and UDP-N-acetyl-alpha-D-glucosamine: step 6/6. Transfers the gamma-phosphate of ATP to the 4'-position of a tetraacyldisaccharide 1-phosphate intermediate (termed DS-1-P) to form tetraacyldisaccharide 1,4'-bis-phosphate (lipid IVA). This Shewanella pealeana (strain ATCC 700345 / ANG-SQ1) protein is Tetraacyldisaccharide 4'-kinase.